A 450-amino-acid chain; its full sequence is Divalent metal cation transporter MntH (450 aa).

The next 11 membrane-spanning stretches (helical) occupy residues 34–54 (LSFL…GNWI), 61–81 (AQYG…AMLL), 108–128 (IAII…IAEV), 141–161 (IPLI…LFIM), 170–190 (AIVG…VYIS), 212–232 (GILY…NLYL), 263–283 (IQLS…ASLF), 305–325 (PVLG…ALLA), 361–381 (SLAV…AAKI), 383–403 (QLLV…LIPL), and 422–442 (VNII…YLIV).

This sequence belongs to the NRAMP family.

Its subcellular location is the cell membrane. H(+)-stimulated, divalent metal cation uptake system. This chain is Divalent metal cation transporter MntH, found in Staphylococcus aureus (strain JH1).